A 284-amino-acid polypeptide reads, in one-letter code: RNase adapter protein RapZ (284 aa).

8–15 (GRSGSGKS) is an ATP binding site. 56 to 59 (DVRN) provides a ligand contact to GTP. The segment at 266-284 (RSRGKNVQSRHRTLEKRKQ) is RNA-binding.

It belongs to the RapZ-like family. RapZ subfamily. As to quaternary structure, homotrimer.

Functionally, modulates the synthesis of GlmS, by affecting the processing and stability of the regulatory small RNA GlmZ. When glucosamine-6-phosphate (GlcN6P) concentrations are high in the cell, RapZ binds GlmZ and targets it to cleavage by RNase E. Consequently, GlmZ is inactivated and unable to activate GlmS synthesis. Under low GlcN6P concentrations, RapZ is sequestered and inactivated by an other regulatory small RNA, GlmY, preventing GlmZ degradation and leading to synthesis of GlmS. This Serratia proteamaculans (strain 568) protein is RNase adapter protein RapZ.